Consider the following 283-residue polypeptide: Thymidylate synthase (283 aa).

Arginine 22 is a dUMP binding site. The active-site Nucleophile is cysteine 160. Residues 180–183 (RSCD), asparagine 191, and 221–223 (HIY) each bind dUMP. Aspartate 183 serves as a coordination point for (6R)-5,10-methylene-5,6,7,8-tetrahydrofolate. Alanine 282 is a binding site for (6R)-5,10-methylene-5,6,7,8-tetrahydrofolate.

The protein belongs to the thymidylate synthase family. Bacterial-type ThyA subfamily. In terms of assembly, homodimer.

It localises to the cytoplasm. The enzyme catalyses dUMP + (6R)-5,10-methylene-5,6,7,8-tetrahydrofolate = 7,8-dihydrofolate + dTMP. It functions in the pathway pyrimidine metabolism; dTTP biosynthesis. Functionally, catalyzes the reductive methylation of 2'-deoxyuridine-5'-monophosphate (dUMP) to 2'-deoxythymidine-5'-monophosphate (dTMP) while utilizing 5,10-methylenetetrahydrofolate (mTHF) as the methyl donor and reductant in the reaction, yielding dihydrofolate (DHF) as a by-product. This enzymatic reaction provides an intracellular de novo source of dTMP, an essential precursor for DNA biosynthesis. This Shewanella frigidimarina (strain NCIMB 400) protein is Thymidylate synthase.